We begin with the raw amino-acid sequence, 501 residues long: MSFGSEHYLCSASSYRKVFGDSSRLSARLSGPGGSGSFRSQSLSRSNVASTAACSSASSLGLGLAYRRLPASDGLDLSQAAARTNEYKIIRTNEKEQLQGLNDRFAVFIEKVHQLETQNRALEAELAALRQRHAEPSRVGELFQRELRELRAQLEEASSARAQALLERDGLAEEVQRLRARCEEESRGREGAERALKAQQRDVDGATLARLDLEKKVESLLDELAFVRQVHDEEVAELLATLQASSQAAAEVDVAVAKPDLTSALREIRAQYESLAAKNLQSAEEWYKSKFANLNEQAARSTEAIRASREEIHEYRRQLQARTIEIEGLRGANESLERQILELEERHSAEVAGYQDSIGQLESDLRNTKSEMARHLREYQDLLNVKMALDIEIAAYRKLLEGEETRFSTGGLSISGLNPLPNPSYLLPPRILSSTASKVSSAGLSLKKEEEEEEEEASKEVSKKTSKVGEGFEETLGEAVISTKKTGKSATEESTSSSQKM.

Positions 1–87 are head; the sequence is MSFGSEHYLC…SQAAARTNEY (87 aa). At Ser72 the chain carries Phosphoserine. Residues 88-129 form a coil 1A region; sequence KIIRTNEKEQLQGLNDRFAVFIEKVHQLETQNRALEAELAAL. The region spanning 94-407 is the IF rod domain; sequence EKEQLQGLND…KLLEGEETRF (314 aa). Residues 130–142 form a linker 1 region; that stretch reads RQRHAEPSRVGEL. The tract at residues 143 to 238 is coil 1B; it reads FQRELRELRA…QVHDEEVAEL (96 aa). A Phosphoserine modification is found at Ser219. Residues 239–262 form a linker 2 region; sequence LATLQASSQAAAEVDVAVAKPDLT. The tract at residues 263 to 408 is coil 2; that stretch reads SALREIRAQY…LLEGEETRFS (146 aa). At Lys290 the chain carries N6-acetyllysine. A phosphoserine mark is found at Ser335 and Ser498. Residues 409 to 501 form a tail region; the sequence is TGGLSISGLN…EESTSSSQKM (93 aa). Residues 441 to 501 are disordered; it reads SAGLSLKKEE…EESTSSSQKM (61 aa). The span at 488-501 shows a compositional bias: polar residues; that stretch reads KSATEESTSSSQKM.

It belongs to the intermediate filament family. In terms of assembly, forms homodimers (in vitro). Forms heterodimers with NEFL, NEFM or NEFH (in vitro). O-glycosylated.

Functionally, class-IV neuronal intermediate filament that is able to self-assemble. It is involved in the morphogenesis of neurons. It may form an independent structural network without the involvement of other neurofilaments or it may cooperate with NEFL to form the filamentous backbone to which NEFM and NEFH attach to form the cross-bridges. May also cooperate with the neuronal intermediate filament protein PRPH to form filamentous networks. In Mus musculus (Mouse), this protein is Alpha-internexin (Ina).